We begin with the raw amino-acid sequence, 639 residues long: Elongation factor 4 (639 aa).

Residues 39–221 (TMIRNFCIIA…EIVRRVPAPV (183 aa)) form the tr-type G domain. GTP contacts are provided by residues 51-56 (DHGKST) and 168-171 (NKID).

It belongs to the TRAFAC class translation factor GTPase superfamily. Classic translation factor GTPase family. LepA subfamily.

It localises to the cell membrane. It carries out the reaction GTP + H2O = GDP + phosphate + H(+). Required for accurate and efficient protein synthesis under certain stress conditions. May act as a fidelity factor of the translation reaction, by catalyzing a one-codon backward translocation of tRNAs on improperly translocated ribosomes. Back-translocation proceeds from a post-translocation (POST) complex to a pre-translocation (PRE) complex, thus giving elongation factor G a second chance to translocate the tRNAs correctly. Binds to ribosomes in a GTP-dependent manner. The protein is Elongation factor 4 of Frankia casuarinae (strain DSM 45818 / CECT 9043 / HFP020203 / CcI3).